Reading from the N-terminus, the 426-residue chain is Serine hydroxymethyltransferase (426 aa).

(6S)-5,6,7,8-tetrahydrofolate is bound by residues Leu-118 and 122–124 (GHL). Lys-227 is modified (N6-(pyridoxal phosphate)lysine).

This sequence belongs to the SHMT family. Homodimer. Pyridoxal 5'-phosphate serves as cofactor.

Its subcellular location is the cytoplasm. It catalyses the reaction (6R)-5,10-methylene-5,6,7,8-tetrahydrofolate + glycine + H2O = (6S)-5,6,7,8-tetrahydrofolate + L-serine. It functions in the pathway one-carbon metabolism; tetrahydrofolate interconversion. It participates in amino-acid biosynthesis; glycine biosynthesis; glycine from L-serine: step 1/1. Catalyzes the reversible interconversion of serine and glycine with tetrahydrofolate (THF) serving as the one-carbon carrier. This reaction serves as the major source of one-carbon groups required for the biosynthesis of purines, thymidylate, methionine, and other important biomolecules. Also exhibits THF-independent aldolase activity toward beta-hydroxyamino acids, producing glycine and aldehydes, via a retro-aldol mechanism. This is Serine hydroxymethyltransferase from Mycobacterium avium (strain 104).